The primary structure comprises 191 residues: Accessory gene regulator protein B (191 aa).

5 helical membrane-spanning segments follow: residues 45-65, 81-101, 108-128, 144-164, and 165-185; these read IVVYGLALLFHVFLYTLTVHL, STFACYIESIILFVILPWILI, IFMIVLAAVAFILICLYSPAI, ITAIFVAGILLIISFFIKQPF, and NELVQLGIVLIGAAQLPIFFP.

The protein belongs to the AgrB family.

Its subcellular location is the cell membrane. Essential for the production of a quorum sensing system signal molecule, the autoinducing peptide (AIP). This quorum sensing system is responsible for the regulation of the expression of virulence factor genes. Involved in the proteolytic processing of AgrD, the precursor of AIP. In Staphylococcus carnosus (strain TM300), this protein is Accessory gene regulator protein B.